The primary structure comprises 286 residues: Elongation factor Ts (286 aa).

The segment at 82 to 85 (TDFV) is involved in Mg(2+) ion dislocation from EF-Tu.

This sequence belongs to the EF-Ts family.

It is found in the cytoplasm. Associates with the EF-Tu.GDP complex and induces the exchange of GDP to GTP. It remains bound to the aminoacyl-tRNA.EF-Tu.GTP complex up to the GTP hydrolysis stage on the ribosome. This chain is Elongation factor Ts, found in Hamiltonella defensa subsp. Acyrthosiphon pisum (strain 5AT).